Here is a 164-residue protein sequence, read N- to C-terminus: Class I hydrophobin rodA (164 aa).

The signal sequence occupies residues 1–18 (MRFSISALVLGLAATVYA). N50 carries N-linked (GlcNAc...) asparagine glycosylation. Disulfide bonds link C60–C138, C68–C132, C69–C109, and C139–C157.

Belongs to the fungal hydrophobin family. In terms of assembly, self-assembles to form functional amyloid fibrils called rodlets. Self-assembly into fibrillar rodlets occurs spontaneously at hydrophobic:hydrophilic interfaces and the rodlets further associate laterally to form amphipathic monolayers.

The protein resides in the secreted. It is found in the cell wall. In terms of biological role, aerial growth, conidiation, and dispersal of filamentous fungi in the environment rely upon a capability of their secreting small amphipathic proteins called hydrophobins (HPBs) with low sequence identity. Class I can self-assemble into an outermost layer of rodlet bundles on aerial cell surfaces, conferring cellular hydrophobicity that supports fungal growth, development and dispersal; whereas Class II form highly ordered films at water-air interfaces through intermolecular interactions but contribute nothing to the rodlet structure. RodA is a class I hydrophobin involved in the cell surface hydrophobicity and conidiation under aerial conditions. The surface rodlet layer of the conidial cell wall makes airborne conidia of filamentous fungi inert to both innate and adaptive immunity. The protein is Class I hydrophobin rodA of Penicillium camembertii.